The chain runs to 1023 residues: Sodium/potassium-transporting ATPase subunit alpha-1 (1023 aa).

Residues 1–5 constitute a propeptide that is removed on maturation; sequence MGKGV. Over residues 1 to 11 the composition is skewed to basic and acidic residues; that stretch reads MGKGVGRDKYE. The interval 1–39 is disordered; sequence MGKGVGRDKYEPAAVSEQGDKKGKKGKKDRDMDELKKEV. At 6–87 the chain is on the cytoplasmic side; it reads GRDKYEPAAV…NALTPPPTTP (82 aa). The residue at position 9 (lysine 9) is an N6-acetyllysine. Tyrosine 10 is subject to Phosphotyrosine. The residue at position 16 (serine 16) is a Phosphoserine. Lysine 21 carries the post-translational modification N6-acetyllysine. The segment covering 28–39 has biased composition (basic and acidic residues); it reads KDRDMDELKKEV. Phosphoserine is present on residues serine 40 and serine 47. Residues 82-84 form a phosphoinositide-3 kinase binding region; sequence PPP. A helical membrane pass occupies residues 88–108; sequence EWIKFCRQLFGGFSMLLWIGA. Topologically, residues 109–131 are extracellular; that stretch reads ILCFLAYSIQAATEEEPQNDNLY. A helical transmembrane segment spans residues 132–152; that stretch reads LGVVLSAVVIITGCFSYYQEA. The Cytoplasmic segment spans residues 153–288; it reads KSSKIMESFK…GGQTPIAAEI (136 aa). A disordered region spans residues 216–235; sequence SSLTGESEPQTRSPDFTNEN. Serine 228 is modified (phosphoserine). At tyrosine 260 the chain carries Phosphotyrosine. The helical transmembrane segment at 289–308 threads the bilayer; it reads EHFIHIITGVAVFLGVSFFI. Topologically, residues 309–320 are extracellular; sequence LSLILEYTWLEA. A helical membrane pass occupies residues 321–338; sequence VIFLIGIIVANVPEGLLA. The Cytoplasmic segment spans residues 339 to 772; it reads TVTVCLTLTA…EEGRLIFDNL (434 aa). The 4-aspartylphosphate intermediate role is filled by aspartate 376. Residues serine 452 and serine 484 each carry the phosphoserine modification. Lysine 487 lines the ATP pocket. A Phosphotyrosine modification is found at tyrosine 542. The interval 596-717 is mediates interaction with SCN7A; it reads RAAVPDAVGK…QGAIVAVTGD (122 aa). Position 661 is an N6-succinyllysine (lysine 661). Residues serine 668 and serine 675 each carry the phosphoserine modification. Residues aspartate 717 and aspartate 721 each contribute to the Mg(2+) site. A helical transmembrane segment spans residues 773-792; sequence KKSIAYTLTSNIPEITPFLI. Topologically, residues 793–802 are extracellular; that stretch reads FIIANIPLPL. Residues 803 to 823 traverse the membrane as a helical segment; that stretch reads GTVTILCIDLGTDMVPAISLA. Residues 824-843 are Cytoplasmic-facing; sequence YEQAESDIMKRQPRNPKTDK. A helical transmembrane segment spans residues 844 to 866; the sequence is LVNERLISMAYGQIGMIQALGGF. Topologically, residues 867 to 918 are extracellular; that stretch reads FTYFVILAENGFLPIHLLGLRVDWDDRWINDVEDSYGQQWTYEQRKIVEFTC. The helical transmembrane segment at 919–938 threads the bilayer; the sequence is HTAFFVSIVVVQWADLVICK. The Cytoplasmic portion of the chain corresponds to 939-951; the sequence is TRRNSVFQQGMKN. The residue at position 943 (serine 943) is a Phosphoserine; by PKA. The helical transmembrane segment at 952–970 threads the bilayer; that stretch reads KILIFGLFEETALAAFLSY. At 971-985 the chain is on the extracellular side; the sequence is CPGMGVALRMYPLKP. Residues 986–1006 traverse the membrane as a helical segment; it reads TWWFCAFPYSLLIFVYDEVRK. Residues 1007-1023 lie on the Cytoplasmic side of the membrane; it reads LIIRRRPGGWVEKETYY.

Belongs to the cation transport ATPase (P-type) (TC 3.A.3) family. Type IIC subfamily. In terms of assembly, the sodium/potassium-transporting ATPase is composed of a catalytic alpha subunit, an auxiliary non-catalytic beta subunit and an additional regulatory subunit. Interacts with regulatory subunit FXYD1. Interacts with regulatory subunit FXYD3. Interacts with SIK1. Binds the HLA class II histocompatibility antigen DR1. Interacts with SLC35G1 and STIM1. Interacts with CLN3; this interaction regulates the sodium/potassium-transporting ATPase complex localization at the plasma membrane. Interacts with SCN7A; activates ATP1A1 P-type sodium:potassium-exchanging transporter activity which indirectly signals to nearby neurons to regulate sodium homeostasis. In terms of processing, phosphorylation on Tyr-10 modulates pumping activity. Phosphorylation of Ser-943 by PKA modulates the response of ATP1A1 to PKC. Dephosphorylation by protein phosphatase 2A (PP2A) following increases in intracellular sodium, leading to increase catalytic activity.

The protein resides in the cell membrane. Its subcellular location is the basolateral cell membrane. The protein localises to the sarcolemma. It is found in the cell projection. It localises to the axon. The protein resides in the melanosome. The catalysed reaction is K(+)(out) + Na(+)(in) + ATP + H2O = K(+)(in) + Na(+)(out) + ADP + phosphate + H(+). Its function is as follows. This is the catalytic component of the active enzyme, which catalyzes the hydrolysis of ATP coupled with the exchange of sodium and potassium ions across the plasma membrane. This action creates the electrochemical gradient of sodium and potassium ions, providing the energy for active transport of various nutrients. Could also be part of an osmosensory signaling pathway that senses body-fluid sodium levels and controls salt intake behavior as well as voluntary water intake to regulate sodium homeostasis. This is Sodium/potassium-transporting ATPase subunit alpha-1 (ATP1A1) from Homo sapiens (Human).